We begin with the raw amino-acid sequence, 1704 residues long: Phospholipid-transporting ATPase ABCA3 (1704 aa).

A glycan (N-linked (GlcNAc...) asparagine) is linked at Asn-14. Residues 22–42 (VLVTVLELFLPLLFSGILIWL) traverse the membrane as a helical segment. N-linked (GlcNAc...) asparagine glycosylation is found at Asn-53, Asn-124, Asn-140, and Asn-228. A run of 6 helical transmembrane segments spans residues 261–283 (YQLP…RAVV), 307–327 (AWFL…TLLF), 344–364 (SLVL…SFMV), 373–393 (IAAA…FFVA), 405–425 (LLSC…IGKF), and 447–467 (FCFG…GLVT). The ABC transporter 1 domain occupies 530–763 (IKIKHLSKVF…YGAGYHMTLV (234 aa)). ATP is bound at residue 566 to 573 (GHNGAGKT). Asn-620 carries an N-linked (GlcNAc...) asparagine glycan. Transmembrane regions (helical) follow at residues 925–945 (MVAA…LAIH), 1100–1120 (IALN…ILAV), 1144–1164 (SALL…LVVF), 1183–1203 (LLLM…SFFF), 1213–1233 (LTIF…IMRI), 1245–1265 (LDHV…SNFY), and 1310–1330 (MAAS…NLLW). Residue Asn-1350 is glycosylated (N-linked (GlcNAc...) asparagine). Residues 1381-1614 (LIINELSKVY…FGSGYSLQAK (234 aa)) form the ABC transporter 2 domain. 1416 to 1423 (GFNGAGKT) lines the ATP pocket.

This sequence belongs to the ABC transporter superfamily. ABCA family. In terms of assembly, homooligomer; disulfide-linked. Post-translationally, N-glycosylated. Localization at intracellular vesicles is accompanied by processing of oligosaccharide from high mannose type to complex type. N-linked glycosylation at Asn-124 and Asn-140 is required for stability and efficient anterograde trafficking and prevents from proteasomal degradation. In terms of processing, proteolytically cleaved by CTSL and to a lower extent by CTSB within multivesicular bodies (MVB) and lamellar bodies (LB) leading to a mature form of 150 kDa. Highly expressed in the lung and moderately expressed in the kidney, adipose, macrophage, and spleen.

The protein resides in the endosome. It localises to the multivesicular body membrane. It is found in the cytoplasmic vesicle membrane. Its subcellular location is the late endosome membrane. The protein localises to the lysosome membrane. The catalysed reaction is a 1,2-diacyl-sn-glycero-3-phospho-(1'-sn-glycerol)(in) + ATP + H2O = a 1,2-diacyl-sn-glycero-3-phospho-(1'-sn-glycerol)(out) + ADP + phosphate + H(+). It carries out the reaction a 1,2-diacyl-sn-glycero-3-phosphocholine(in) + ATP + H2O = a 1,2-diacyl-sn-glycero-3-phosphocholine(out) + ADP + phosphate + H(+). The enzyme catalyses ATP + H2O + phospholipidSide 1 = ADP + phosphate + phospholipidSide 2.. It catalyses the reaction ATP + H2O + xenobioticSide 1 = ADP + phosphate + xenobioticSide 2.. The catalysed reaction is 1,2-dihexadecanoyl-sn-glycero-3-phosphocholine(in) + ATP + H2O = 1,2-dihexadecanoyl-sn-glycero-3-phosphocholine(out) + ADP + phosphate + H(+). It carries out the reaction cholesterol(in) + ATP + H2O = cholesterol(out) + ADP + phosphate + H(+). Its function is as follows. Catalyzes the ATP-dependent transport of phospholipids such as phosphatidylcholine and phosphoglycerol from the cytoplasm into the lumen side of lamellar bodies, in turn participates in the lamellar bodies biogenesis and homeostasis of pulmonary surfactant. Transports preferentially phosphatidylcholine containing short acyl chains. In addition plays a role as an efflux transporter of miltefosine across macrophage membranes and free cholesterol (FC) through intralumenal vesicles by removing FC from the cell as a component of surfactant and protects cells from free cholesterol toxicity. This is Phospholipid-transporting ATPase ABCA3 (Abca3) from Mus musculus (Mouse).